A 217-amino-acid polypeptide reads, in one-letter code: GRB2-related adapter protein (217 aa).

In terms of domain architecture, SH3 1 spans 1–58 (MESVALYSFQATESDELAFNKGDTLKILNMEDDQNWYKAELRGAEGFVPKNYIRLKPH). An SH2 domain is found at 60–152 (WYSGRISRQL…KRQVFLQDEE (93 aa)). An SH3 2 domain is found at 158-217 (PRACFAQAQFDFSAQDPSQLSFRRGDIIEVLERLDPSWWRGRLSGRIGFFPRSYVQPVHM).

The protein belongs to the GRB2/sem-5/DRK family. Associates through its SH2 domain with ligand-activated receptors for stem cell factor (KIT) and erythropoietin (EPOR). Also forms a stable complex with the Bcr-Abl oncoprotein. GRAP is associated with the Ras guanine nucleotide exchange factor SOS1, primarily through its N-terminal SH3 domain. Interacts with phosphorylated LAT upon TCR activation. Interacts with SHB.

It localises to the membrane. Its subcellular location is the synapse. Functionally, couples signals from receptor and cytoplasmic tyrosine kinases to the Ras signaling pathway. Plays a role in the inner ear and in hearing. The chain is GRB2-related adapter protein (GRAP) from Bos taurus (Bovine).